A 118-amino-acid chain; its full sequence is Cell division protein FtsB (118 aa).

Residues 1–6 (MRNWRW) lie on the Cytoplasmic side of the membrane. A helical membrane pass occupies residues 7–24 (LLLVLAALLAWLQHRFWF). Residues 25-118 (GPGNSGEVRM…DLSQPRREKR (94 aa)) are Periplasmic-facing. Residues 30 to 66 (GEVRMLQVQIVQQHQENERLRQRNASLAAEVKNLKDG) are a coiled coil. The interval 98-118 (LPNDTSADHGVDLSQPRREKR) is disordered. The segment covering 103–118 (SADHGVDLSQPRREKR) has biased composition (basic and acidic residues).

Belongs to the FtsB family. Part of a complex composed of FtsB, FtsL and FtsQ.

Its subcellular location is the cell inner membrane. Its function is as follows. Essential cell division protein. May link together the upstream cell division proteins, which are predominantly cytoplasmic, with the downstream cell division proteins, which are predominantly periplasmic. The protein is Cell division protein FtsB of Xylella fastidiosa (strain M23).